The following is a 69-amino-acid chain: Cytochrome c oxidase subunit 8A, mitochondrial (69 aa).

A mitochondrion-targeting transit peptide spans 1–25 (MSVLTPLLLRGLTGSARRLPVPRAK). Positions 2–19 (SVLTPLLLRGLTGSARRL) match the SIFI-degron motif. At 26 to 36 (IHSLPPEEKLG) the chain is on the mitochondrial matrix side. Residues 37–60 (IMELAVGLTSCFVTFLLPAGWILS) traverse the membrane as a helical segment. Topologically, residues 61–69 (HLETYRRPE) are mitochondrial intermembrane.

This sequence belongs to the cytochrome c oxidase VIII family. Component of the cytochrome c oxidase (complex IV, CIV), a multisubunit enzyme composed of 14 subunits. The complex is composed of a catalytic core of 3 subunits MT-CO1, MT-CO2 and MT-CO3, encoded in the mitochondrial DNA, and 11 supernumerary subunits COX4I, COX5A, COX5B, COX6A, COX6B, COX6C, COX7A, COX7B, COX7C, COX8 and NDUFA4, which are encoded in the nuclear genome. The complex exists as a monomer or a dimer and forms supercomplexes (SCs) in the inner mitochondrial membrane with NADH-ubiquinone oxidoreductase (complex I, CI) and ubiquinol-cytochrome c oxidoreductase (cytochrome b-c1 complex, complex III, CIII), resulting in different assemblies (supercomplex SCI(1)III(2)IV(1) and megacomplex MCI(2)III(2)IV(2)). In terms of processing, in response to mitochondrial stress, the precursor protein is ubiquitinated by the SIFI complex in the cytoplasm before mitochondrial import, leading to its degradation. Within the SIFI complex, UBR4 initiates ubiquitin chain that are further elongated or branched by KCMF1.

Its subcellular location is the mitochondrion inner membrane. It participates in energy metabolism; oxidative phosphorylation. Its function is as follows. Component of the cytochrome c oxidase, the last enzyme in the mitochondrial electron transport chain which drives oxidative phosphorylation. The respiratory chain contains 3 multisubunit complexes succinate dehydrogenase (complex II, CII), ubiquinol-cytochrome c oxidoreductase (cytochrome b-c1 complex, complex III, CIII) and cytochrome c oxidase (complex IV, CIV), that cooperate to transfer electrons derived from NADH and succinate to molecular oxygen, creating an electrochemical gradient over the inner membrane that drives transmembrane transport and the ATP synthase. Cytochrome c oxidase is the component of the respiratory chain that catalyzes the reduction of oxygen to water. Electrons originating from reduced cytochrome c in the intermembrane space (IMS) are transferred via the dinuclear copper A center (CU(A)) of subunit 2 and heme A of subunit 1 to the active site in subunit 1, a binuclear center (BNC) formed by heme A3 and copper B (CU(B)). The BNC reduces molecular oxygen to 2 water molecules using 4 electrons from cytochrome c in the IMS and 4 protons from the mitochondrial matrix. The sequence is that of Cytochrome c oxidase subunit 8A, mitochondrial (COX8A) from Hylobates agilis (Agile gibbon).